The chain runs to 68 residues: Antimicrobial peptide Eval655 (68 aa).

An N-terminal signal peptide occupies residues 1–23; it reads MKTQFVVLLVALVLLQMFAQSEA. At Leu36 the chain carries Leucine amide. Residues 37 to 68 constitute a propeptide that is removed on maturation; sequence GKRGLKNLDDFDDIFDDDLSSADLEFLKQLMR.

The protein belongs to the non-disulfide-bridged peptide (NDBP) superfamily. Short antimicrobial peptide (group 4) family. Expressed by the venom gland.

The protein localises to the secreted. In terms of biological role, probable antimicrobial peptide. Shows low inhibitory activity against herpes simplex virus type 1 (HSV-1). The polypeptide is Antimicrobial peptide Eval655 (Euscorpiops validus (Scorpion)).